The chain runs to 175 residues: Keratin-associated protein 13-2 (175 aa).

Repeat copies occupy residues 46–55, 56–65, 66–75, 76–85, and 92–101. Positions 46-101 are 5 X 10 AA approximate repeats; it reads CQLGSSLYRGCQEICWEPTSCQTSYVESSPCQTSCYRPRTSLLCSPCKTTYSGSLG.

The protein belongs to the PMG family. Interacts with hair keratins.

In the hair cortex, hair keratin intermediate filaments are embedded in an interfilamentous matrix, consisting of hair keratin-associated proteins (KRTAP), which are essential for the formation of a rigid and resistant hair shaft through their extensive disulfide bond cross-linking with abundant cysteine residues of hair keratins. The matrix proteins include the high-sulfur and high-glycine-tyrosine keratins. This Homo sapiens (Human) protein is Keratin-associated protein 13-2 (KRTAP13-2).